The sequence spans 422 residues: Ena/VASP-like protein (422 aa).

The WH1 domain maps to 4–118; the sequence is FEEFSEQSIC…NAMLFALNIM (115 aa). The segment covering 120 to 135 has biased composition (polar residues); the sequence is SQEGGPSSQRQVQNGP. 2 disordered regions span residues 120–139 and 147–375; these read SQEG…SPDE and VMEQ…PAGS. The residue at position 136 (S136) is a Phosphoserine. The segment covering 147–163 has biased composition (basic and acidic residues); sequence VMEQHQQQRQESLERRT. Positions 175 to 186 are enriched in low complexity; it reads PSSAASAPVSCS. Residues 187–212 show a composition bias toward pro residues; it reads GPPPPPPPPVPPPPTGATPPPPPPLP. An EVH2 block A region spans residues 228 to 248; sequence GLAAAIAGAKLRRVQRPEDAS. The segment at 228-419 is EVH2; that stretch reads GLAAAIAGAK…DAIRQELSGI (192 aa). The KLKR motif lies at 237 to 240; it reads KLRR. The segment covering 248–259 has biased composition (low complexity); that stretch reads SGGSSPSGTSKS. S252 and S265 each carry phosphoserine. Residues 271-288 form an EVH2 block B region; the sequence is GGLMEEMNKLLAKRRKAA. The span at 305–326 shows a compositional bias: polar residues; the sequence is EDPSTSPSPGTRAASQPPNSSE. S310, S312, S335, S337, S347, S355, S360, and S375 each carry phosphoserine. A compositionally biased stretch (basic and acidic residues) spans 327 to 337; that stretch reads AGRKPWERSNS. A required for interaction with ZDHHC17 region spans residues 348 to 368; it reads RTPSVAKSPEAKSPLQSQPHS. The interval 385 to 419 is EVH2 block C; it reads DLDRMKQEILEEVVRELHKVKDEIIDAIRQELSGI. Residues 388 to 414 are a coiled coil; it reads RMKQEILEEVVRELHKVKDEIIDAIRQ.

Belongs to the Ena/VASP family. In terms of assembly, homotetramer. Binds to the SH3 domains of ABL1, LYN and SRC. Also binds to profilin, with preference for isoform IIa of PFN2, and the WW domain of APBB1/FE65. Binds to SEMA6A. Interacts, via the Pro-rich region, with the C-terminal SH3 domain of DNMBP. Interacts with RAPH1. Binds, via the EVH1 domain, the Pro-rich domain of Listeria monocytogenes actA. Binds, via the EVH1 domain, the Pro-rich domain of ZYX. Interacts with FYB1. Interacts with ZDHHC17. Phosphorylated by PKA; phosphorylation abolishes binding to SH3 domains of ABL and SRC.

Its subcellular location is the cytoplasm. It is found in the cytoskeleton. The protein resides in the stress fiber. The protein localises to the cell projection. It localises to the lamellipodium. Functionally, ena/VASP proteins are actin-associated proteins involved in a range of processes dependent on cytoskeleton remodeling and cell polarity such as axon guidance and lamellipodial and filopodial dynamics in migrating cells. EVL enhances actin nucleation and polymerization. The protein is Ena/VASP-like protein (EVL) of Pongo abelii (Sumatran orangutan).